The sequence spans 148 residues: 3-dehydroquinate dehydratase (148 aa).

The active-site Proton acceptor is the Y23. The substrate site is built by N75, H81, and D88. H101 serves as the catalytic Proton donor. Substrate is bound by residues 102–103 (LS) and R112.

Belongs to the type-II 3-dehydroquinase family. Homododecamer.

It carries out the reaction 3-dehydroquinate = 3-dehydroshikimate + H2O. Its pathway is metabolic intermediate biosynthesis; chorismate biosynthesis; chorismate from D-erythrose 4-phosphate and phosphoenolpyruvate: step 3/7. In terms of biological role, catalyzes a trans-dehydration via an enolate intermediate. This Halorhodospira halophila (strain DSM 244 / SL1) (Ectothiorhodospira halophila (strain DSM 244 / SL1)) protein is 3-dehydroquinate dehydratase.